A 168-amino-acid chain; its full sequence is Vasopressin-neurophysin 2-copeptin (168 aa).

Residues 1–23 (MLARMLNTTLSACFLSLLAFSSA) form the signal peptide. The cysteines at positions 24 and 29 are disulfide-linked. Gly-32 is modified (glycine amide). 7 disulfide bridges follow: Cys-45/Cys-89, Cys-48/Cys-62, Cys-56/Cys-79, Cys-63/Cys-69, Cys-96/Cys-108, Cys-102/Cys-120, and Cys-109/Cys-114. Asn-135 carries an N-linked (GlcNAc...) asparagine glycan.

This sequence belongs to the vasopressin/oxytocin family. Interacts with vasopressin receptors V1bR/AVPR1B (Ki=85 pM), V1aR/AVPR1A (Ki=0.6 nM) and V2R/AVPR2 (Ki=4.9 nM). Interacts with oxytocin receptor (OXTR) (Ki=110 nM).

The protein localises to the secreted. Its function is as follows. Neurophysin 2 specifically binds vasopressin. Functionally, vasopressin has a direct antidiuretic action on the kidney, it also causes vasoconstriction of the peripheral vessels. Acts by binding to vasopressin receptors (V1bR/AVPR1B, V1aR/AVPR1A, and V2R/AVPR2). The protein is Vasopressin-neurophysin 2-copeptin (Avp) of Mus musculus (Mouse).